The primary structure comprises 428 residues: Aerobic C4-dicarboxylate transport protein (428 aa).

Helical transmembrane passes span 5–27 (LFKS…GHYY), 47–64 (MIIA…IAGM), 77–99 (ALLY…VNVV), 141–163 (VIGA…FGFA), 184–206 (VIFG…AMAF), 216–238 (LVQL…VVVL), 289–311 (VVGL…YLTM), 326–348 (IFHQ…GVTG), and 353–375 (VLAA…ILGI).

This sequence belongs to the dicarboxylate/amino acid:cation symporter (DAACS) (TC 2.A.23) family.

The protein localises to the cell inner membrane. In terms of biological role, responsible for the transport of dicarboxylates such as succinate, fumarate, and malate from the periplasm across the membrane. The polypeptide is Aerobic C4-dicarboxylate transport protein (Salmonella typhi).